Here is a 678-residue protein sequence, read N- to C-terminus: DNA ligase (678 aa).

Residues 35 to 39 (DEEYD), 84 to 85 (SL), and E115 contribute to the NAD(+) site. K117 (N6-AMP-lysine intermediate) is an active-site residue. Positions 138, 172, 288, and 312 each coordinate NAD(+). Zn(2+)-binding residues include C406, C409, C425, and C430. Positions 589–678 (VQSKILSNLT…IKNLRQQKLF (90 aa)) constitute a BRCT domain.

The protein belongs to the NAD-dependent DNA ligase family. LigA subfamily. Mg(2+) serves as cofactor. It depends on Mn(2+) as a cofactor.

The catalysed reaction is NAD(+) + (deoxyribonucleotide)n-3'-hydroxyl + 5'-phospho-(deoxyribonucleotide)m = (deoxyribonucleotide)n+m + AMP + beta-nicotinamide D-nucleotide.. In terms of biological role, DNA ligase that catalyzes the formation of phosphodiester linkages between 5'-phosphoryl and 3'-hydroxyl groups in double-stranded DNA using NAD as a coenzyme and as the energy source for the reaction. It is essential for DNA replication and repair of damaged DNA. This Pseudothermotoga lettingae (strain ATCC BAA-301 / DSM 14385 / NBRC 107922 / TMO) (Thermotoga lettingae) protein is DNA ligase.